Here is a 235-residue protein sequence, read N- to C-terminus: Ribonuclease 3 (235 aa).

The region spanning 6 to 131 is the RNase III domain; sequence IDQLKKLTGH…LIAVIYLDGG (126 aa). Glu44 is a binding site for Mg(2+). Asp48 is an active-site residue. Positions 117 and 120 each coordinate Mg(2+). Glu120 is an active-site residue. A DRBM domain is found at 156 to 225; that stretch reads DAKTELQEWA…AEKILRREGM (70 aa).

It belongs to the ribonuclease III family. As to quaternary structure, homodimer. It depends on Mg(2+) as a cofactor.

It is found in the cytoplasm. The enzyme catalyses Endonucleolytic cleavage to 5'-phosphomonoester.. In terms of biological role, digests double-stranded RNA. Involved in the processing of primary rRNA transcript to yield the immediate precursors to the large and small rRNAs (23S and 16S). Processes some mRNAs, and tRNAs when they are encoded in the rRNA operon. Processes pre-crRNA and tracrRNA of type II CRISPR loci if present in the organism. The chain is Ribonuclease 3 from Bartonella bacilliformis (strain ATCC 35685 / KC583 / Herrer 020/F12,63).